The sequence spans 465 residues: Ribulose bisphosphate carboxylase large chain (465 aa).

Lys-4 carries the post-translational modification N6,N6,N6-trimethyllysine. Residues Asn-113 and Thr-163 each contribute to the substrate site. Lys-165 (proton acceptor) is an active-site residue. Lys-167 provides a ligand contact to substrate. Lys-191, Asp-193, and Glu-194 together coordinate Mg(2+). At Lys-191 the chain carries N6-carboxylysine. His-284 serves as the catalytic Proton acceptor. Positions 285, 317, and 369 each coordinate substrate.

This sequence belongs to the RuBisCO large chain family. Type I subfamily. Heterohexadecamer of 8 large chains and 8 small chains; disulfide-linked. The disulfide link is formed within the large subunit homodimers. The cofactor is Mg(2+). The disulfide bond which can form in the large chain dimeric partners within the hexadecamer appears to be associated with oxidative stress and protein turnover.

It localises to the plastid. Its subcellular location is the chloroplast. It carries out the reaction 2 (2R)-3-phosphoglycerate + 2 H(+) = D-ribulose 1,5-bisphosphate + CO2 + H2O. The catalysed reaction is D-ribulose 1,5-bisphosphate + O2 = 2-phosphoglycolate + (2R)-3-phosphoglycerate + 2 H(+). Its function is as follows. RuBisCO catalyzes two reactions: the carboxylation of D-ribulose 1,5-bisphosphate, the primary event in carbon dioxide fixation, as well as the oxidative fragmentation of the pentose substrate in the photorespiration process. Both reactions occur simultaneously and in competition at the same active site. This Acer saccharum (Sugar maple) protein is Ribulose bisphosphate carboxylase large chain.